Consider the following 301-residue polypeptide: UPF0282 protein Pcal_1546 (301 aa).

Belongs to the UPF0282 family.

This chain is UPF0282 protein Pcal_1546, found in Pyrobaculum calidifontis (strain DSM 21063 / JCM 11548 / VA1).